The chain runs to 561 residues: Excitatory amino acid transporter 4 (561 aa).

Residues 1–52 (MSSHGNSLFLRESGAGGGCLQGLQDSLQQRALRTRLRLQTMTREHVRRFLRR) are Cytoplasmic-facing. At serine 2 the chain carries Phosphoserine. 3 consecutive transmembrane segments (helical) span residues 53–73 (NAFI…AFAL), 96–116 (MLQM…MASL), and 130–150 (VYYM…VTII). Asparagine 213, asparagine 229, and asparagine 236 each carry an N-linked (GlcNAc...) asparagine glycan. Transmembrane regions (helical) follow at residues 259 to 282 (SANG…IGGM), 292 to 319 (FFDS…LFLI), and 341 to 362 (LTVI…YFLV). The segment at residues 368–398 (FPFIGGMLQALITAMGTSSSSATLPITFRCL) is an intramembrane region (discontinuously helical). 385–387 (SSS) lines the L-aspartate pocket. The chain crosses the membrane as a helical span at residues 408 to 434 (ITRFVLPVGATVNMDGTALYEALAAIF). Na(+) is bound by residues glycine 416, threonine 418, and asparagine 420. Residues threonine 424, 465–469 (IPQAG), aspartate 498, and asparagine 505 contribute to the L-aspartate site. Positions 448 to 481 (ITTISITATAASVGAAGIPQAGLVTMVIVLTSVG) form an intramembrane region, discontinuously helical. Residues 495-516 (WFLDRLRTMTNVLGDSIGAAVI) traverse the membrane as a helical segment. Residues asparagine 505 and aspartate 509 each coordinate Na(+).

It belongs to the dicarboxylate/amino acid:cation symporter (DAACS) (TC 2.A.23) family. SLC1A6 subfamily. In terms of assembly, homotrimer. As to expression, brain specific.

The protein localises to the cell membrane. It catalyses the reaction K(+)(in) + L-glutamate(out) + 3 Na(+)(out) + H(+)(out) = K(+)(out) + L-glutamate(in) + 3 Na(+)(in) + H(+)(in). The catalysed reaction is K(+)(in) + L-aspartate(out) + 3 Na(+)(out) + H(+)(out) = K(+)(out) + L-aspartate(in) + 3 Na(+)(in) + H(+)(in). It carries out the reaction D-aspartate(out) + K(+)(in) + 3 Na(+)(out) + H(+)(out) = D-aspartate(in) + K(+)(out) + 3 Na(+)(in) + H(+)(in). In terms of biological role, sodium-dependent, high-affinity amino acid transporter that mediates the uptake of L-glutamate and also L-aspartate and D-aspartate. Functions as a symporter that transports one amino acid molecule together with two or three Na(+) ions and one proton, in parallel with the counter-transport of one K(+) ion. Mediates Cl(-) flux that is not coupled to amino acid transport; this avoids the accumulation of negative charges due to aspartate and Na(+) symport. Plays a redundant role in the rapid removal of released glutamate from the synaptic cleft, which is essential for terminating the postsynaptic action of glutamate. The sequence is that of Excitatory amino acid transporter 4 (Slc1a6) from Mus musculus (Mouse).